The chain runs to 670 residues: Beta-fructofuranosidase 1 (670 aa).

Residues methionine 1–proline 40 are disordered. At methionine 1–threonine 44 the chain is on the cytoplasmic side. Positions methionine 1–glutamine 112 are cleaved as a propeptide — removed in mature form. The chain crosses the membrane as a helical; Signal-anchor for type II membrane protein span at residues valine 45–alanine 65. Residues serine 66–leucine 670 are Lumenal-facing. Substrate contacts are provided by residues tryptophan 136–aspartate 139, glutamine 155, and tryptophan 163. The active site involves aspartate 139. Residue asparagine 165 is glycosylated (N-linked (GlcNAc...) asparagine). Substrate-binding positions include tryptophan 198–serine 199 and arginine 263–aspartate 264. A glycan (N-linked (GlcNAc...) asparagine) is linked at asparagine 275. Residues glutamate 322 and aspartate 362 each coordinate substrate. N-linked (GlcNAc...) asparagine glycosylation is present at asparagine 518. An intrachain disulfide couples cysteine 519 to cysteine 567. Residues asparagine 595 and asparagine 639 are each glycosylated (N-linked (GlcNAc...) asparagine).

Belongs to the glycosyl hydrolase 32 family. As to quaternary structure, may be present in two forms, a 70 kDa monomer and a heterodimer of the 30 kDa and 38 kDa subunits. The ratio of the levels of the two forms within cells appears to be regulated developmentally.

The protein resides in the membrane. The protein localises to the vacuole lumen. It catalyses the reaction Hydrolysis of terminal non-reducing beta-D-fructofuranoside residues in beta-D-fructofuranosides.. It participates in glycan biosynthesis; sucrose metabolism. The protein is Beta-fructofuranosidase 1 (IVR1) of Zea mays (Maize).